We begin with the raw amino-acid sequence, 864 residues long: Leucine--tRNA ligase (864 aa).

Residues 42–52 (PYPSGKLHMGH) carry the 'HIGH' region motif. Residues 624–628 (KMSKS) carry the 'KMSKS' region motif. Lysine 627 lines the ATP pocket.

The protein belongs to the class-I aminoacyl-tRNA synthetase family.

The protein localises to the cytoplasm. The enzyme catalyses tRNA(Leu) + L-leucine + ATP = L-leucyl-tRNA(Leu) + AMP + diphosphate. The polypeptide is Leucine--tRNA ligase (Burkholderia pseudomallei (strain 1106a)).